Consider the following 261-residue polypeptide: tRNA pseudouridine synthase A (261 aa).

Residue Asp51 is the Nucleophile of the active site. Tyr109 contacts substrate.

Belongs to the tRNA pseudouridine synthase TruA family. In terms of assembly, homodimer.

It carries out the reaction uridine(38/39/40) in tRNA = pseudouridine(38/39/40) in tRNA. Functionally, formation of pseudouridine at positions 38, 39 and 40 in the anticodon stem and loop of transfer RNAs. The polypeptide is tRNA pseudouridine synthase A (Psychromonas ingrahamii (strain DSM 17664 / CCUG 51855 / 37)).